The sequence spans 478 residues: Protein nucleotidyltransferase YdiU (478 aa).

ATP contacts are provided by Gly-74, Gly-76, Arg-77, Lys-97, Asp-109, Gly-110, Arg-160, and Arg-167. Asp-236 serves as the catalytic Proton acceptor. The Mg(2+) site is built by Asn-237 and Asp-246. Asp-246 is an ATP binding site.

Belongs to the SELO family. Requires Mg(2+) as cofactor. It depends on Mn(2+) as a cofactor.

The catalysed reaction is L-seryl-[protein] + ATP = 3-O-(5'-adenylyl)-L-seryl-[protein] + diphosphate. The enzyme catalyses L-threonyl-[protein] + ATP = 3-O-(5'-adenylyl)-L-threonyl-[protein] + diphosphate. It catalyses the reaction L-tyrosyl-[protein] + ATP = O-(5'-adenylyl)-L-tyrosyl-[protein] + diphosphate. It carries out the reaction L-histidyl-[protein] + UTP = N(tele)-(5'-uridylyl)-L-histidyl-[protein] + diphosphate. The catalysed reaction is L-seryl-[protein] + UTP = O-(5'-uridylyl)-L-seryl-[protein] + diphosphate. The enzyme catalyses L-tyrosyl-[protein] + UTP = O-(5'-uridylyl)-L-tyrosyl-[protein] + diphosphate. In terms of biological role, nucleotidyltransferase involved in the post-translational modification of proteins. It can catalyze the addition of adenosine monophosphate (AMP) or uridine monophosphate (UMP) to a protein, resulting in modifications known as AMPylation and UMPylation. The sequence is that of Protein nucleotidyltransferase YdiU from Chromobacterium violaceum (strain ATCC 12472 / DSM 30191 / JCM 1249 / CCUG 213 / NBRC 12614 / NCIMB 9131 / NCTC 9757 / MK).